The primary structure comprises 123 residues: Small ribosomal subunit protein uS12 (123 aa).

The tract at residues 1-21 is disordered; it reads MPTIEQLVRKGRQAKPKKSKT. Residues 9–20 show a composition bias toward basic residues; it reads RKGRQAKPKKSK.

The protein belongs to the universal ribosomal protein uS12 family. In terms of assembly, part of the 30S ribosomal subunit. Contacts proteins S8 and S17. May interact with IF1 in the 30S initiation complex.

Its function is as follows. With S4 and S5 plays an important role in translational accuracy. Interacts with and stabilizes bases of the 16S rRNA that are involved in tRNA selection in the A site and with the mRNA backbone. Located at the interface of the 30S and 50S subunits, it traverses the body of the 30S subunit contacting proteins on the other side and probably holding the rRNA structure together. The combined cluster of proteins S8, S12 and S17 appears to hold together the shoulder and platform of the 30S subunit. The polypeptide is Small ribosomal subunit protein uS12 (Bifidobacterium longum (strain NCC 2705)).